Reading from the N-terminus, the 89-residue chain is Small ribosomal subunit protein uS14 (89 aa).

It belongs to the universal ribosomal protein uS14 family. As to quaternary structure, part of the 30S ribosomal subunit. Contacts proteins S3 and S10.

Functionally, binds 16S rRNA, required for the assembly of 30S particles and may also be responsible for determining the conformation of the 16S rRNA at the A site. The protein is Small ribosomal subunit protein uS14 of Amoebophilus asiaticus (strain 5a2).